Consider the following 148-residue polypeptide: Large ribosomal subunit protein bL9 (148 aa).

It belongs to the bacterial ribosomal protein bL9 family.

Binds to the 23S rRNA. The protein is Large ribosomal subunit protein bL9 of Ectopseudomonas mendocina (strain ymp) (Pseudomonas mendocina).